Consider the following 124-residue polypeptide: UPF0102 protein Noc_0355 (124 aa).

Belongs to the UPF0102 family.

This chain is UPF0102 protein Noc_0355, found in Nitrosococcus oceani (strain ATCC 19707 / BCRC 17464 / JCM 30415 / NCIMB 11848 / C-107).